The sequence spans 953 residues: Lysosomal alpha-glucosidase (953 aa).

The signal sequence occupies residues 1–27; sequence MNIRKPLCSNSVVGACTLISLTTAVIL. Positions 28-69 are excised as a propeptide; sequence GHLMLRELMLLPQDLHESSSGLWKTYRPHHQEGYKPGPLHIQ. One can recognise a P-type domain in the interval 80–131; it reads TQCDVPPSSRFDCAPDKGISQEQCEARGCCYVPAGQVLKEPQIGQPWCFFPP. 3 cysteine pairs are disulfide-bonded: Cys82-Cys109, Cys92-Cys108, and Cys103-Cys127. Asn140, Asn233, and Asn390 each carry an N-linked (GlcNAc...) asparagine glycan. Asp404 contacts substrate. N-linked (GlcNAc...) asparagine glycosylation is present at Asn470. Catalysis depends on Asp518, which acts as the Nucleophile. Residue Glu521 is part of the active site. Cys533 and Cys558 are oxidised to a cystine. Substrate contacts are provided by Arg600 and Asp616. A disulfide bridge links Cys647 with Cys658. Residue His674 coordinates substrate. N-linked (GlcNAc...) asparagine glycosylation is found at Asn883, Asn926, and Asn933.

The protein belongs to the glycosyl hydrolase 31 family.

It localises to the lysosome. It is found in the lysosome membrane. It catalyses the reaction Hydrolysis of terminal, non-reducing (1-&gt;4)-linked alpha-D-glucose residues with release of alpha-D-glucose.. Essential for the degradation of glycogen in lysosomes. Has highest activity on alpha-1,4-linked glycosidic linkages, but can also hydrolyze alpha-1,6-linked glucans. This is Lysosomal alpha-glucosidase (Gaa) from Mus musculus (Mouse).